The primary structure comprises 243 residues: TIGR03089 family protein (243 aa).

This sequence belongs to the TIGR03089 family.

In Mycobacterium tuberculosis (strain ATCC 25618 / H37Rv), this protein is TIGR03089 family protein.